Reading from the N-terminus, the 359-residue chain is Peptide chain release factor 1 (359 aa).

Gln236 is subject to N5-methylglutamine.

This sequence belongs to the prokaryotic/mitochondrial release factor family. Post-translationally, methylated by PrmC. Methylation increases the termination efficiency of RF1.

The protein resides in the cytoplasm. In terms of biological role, peptide chain release factor 1 directs the termination of translation in response to the peptide chain termination codons UAG and UAA. In Streptococcus pyogenes serotype M18 (strain MGAS8232), this protein is Peptide chain release factor 1.